The chain runs to 625 residues: DNA-directed RNA polymerase subunit gamma (625 aa).

Zn(2+) is bound by residues Cys-71, Cys-73, Cys-86, and Cys-89. Mg(2+) contacts are provided by Asp-467, Asp-469, and Asp-471.

The protein belongs to the RNA polymerase beta' chain family. RpoC1 subfamily. In terms of assembly, in cyanobacteria the RNAP catalytic core is composed of 2 alpha, 1 beta, 1 beta', 1 gamma and 1 omega subunit. When a sigma factor is associated with the core the holoenzyme is formed, which can initiate transcription. Requires Mg(2+) as cofactor. The cofactor is Zn(2+).

It carries out the reaction RNA(n) + a ribonucleoside 5'-triphosphate = RNA(n+1) + diphosphate. Functionally, DNA-dependent RNA polymerase catalyzes the transcription of DNA into RNA using the four ribonucleoside triphosphates as substrates. In Trichormus variabilis (strain ATCC 29413 / PCC 7937) (Anabaena variabilis), this protein is DNA-directed RNA polymerase subunit gamma.